Here is a 124-residue protein sequence, read N- to C-terminus: Predicted GPI-anchored protein 11 (124 aa).

A signal peptide spans 1–18; sequence MKFQFVTALALASTMAVA. Residues 38–59 form a disordered region; the sequence is REGGSTGAELQDNNQPTAGLFG. Residue Ser-107 is the site of GPI-anchor amidated serine attachment. The propeptide at 108 to 124 is removed in mature form; sequence GAAGGVGNLFSGILGGL.

It localises to the cell membrane. This is Predicted GPI-anchored protein 11 (PGA11) from Candida albicans (strain SC5314 / ATCC MYA-2876) (Yeast).